We begin with the raw amino-acid sequence, 158 residues long: C-type lectin lectoxin-Enh4 (158 aa).

The N-terminal stretch at 1-23 (MGQFTVVSLGLLAMFLSLSGAKG) is a signal peptide. Cystine bridges form between Cys-26–Cys-37, Cys-54–Cys-154, and Cys-129–Cys-146. Residues 33 to 155 (RNGVCNKLFP…CASLHPFICQ (123 aa)) enclose the C-type lectin domain. The Mannose-binding motif lies at 119 to 121 (EPN). Glu-127, Asn-142, and Asp-143 together coordinate Ca(2+).

It belongs to the true venom lectin family. As to expression, expressed by the venom gland.

The protein resides in the secreted. Mannose-binding lectin which recognizes specific carbohydrate structures and agglutinates a variety of animal cells by binding to cell-surface glycoproteins and glycolipids. May be a calcium-dependent lectin. The sequence is that of C-type lectin lectoxin-Enh4 from Pseudoferania polylepis (Macleay's water snake).